Consider the following 90-residue polypeptide: RNA silencing suppressor (90 aa).

The interval 15–18 is basic; sequence KRRR.

It belongs to the carlaviruses nucleic acid-binding protein family.

Its function is as follows. Suppressor of viral-induced RNA silencing. The potential mechanism of action is based on sequestering siRNAs. In Grapevine virus A (isolate Is 151) (GVA), this protein is RNA silencing suppressor (ORF5).